A 33-amino-acid polypeptide reads, in one-letter code: DELTA-pseudomyrmecitoxin-Pp1a subunit B (33 aa).

As to quaternary structure, heterodimer composed of subunit A and subunit B (DELTA-PSDTX-Pp1a); disulfide-linked. As to expression, expressed by the venom gland.

It is found in the secreted. This heterodimer has insecticidal and cytotoxic properties. Induces immediate paralysis when injected into blowflies (Lucilia cuprina), and then death within 24 hours. Also inhibits the growth of Aedes albopictus mosquito C6/36 cells. The chain is DELTA-pseudomyrmecitoxin-Pp1a subunit B from Pseudomyrmex penetrator (Ant).